A 214-amino-acid chain; its full sequence is Ribosomal RNA small subunit methyltransferase G (214 aa).

Residues G81, M86, 132-133 (VE), and R147 each bind S-adenosyl-L-methionine.

The protein belongs to the methyltransferase superfamily. RNA methyltransferase RsmG family.

The protein resides in the cytoplasm. It carries out the reaction guanosine(527) in 16S rRNA + S-adenosyl-L-methionine = N(7)-methylguanosine(527) in 16S rRNA + S-adenosyl-L-homocysteine. Functionally, specifically methylates the N7 position of guanine in position 527 of 16S rRNA. The chain is Ribosomal RNA small subunit methyltransferase G from Pseudomonas fluorescens (strain Pf0-1).